We begin with the raw amino-acid sequence, 84 residues long: Cytochrome b559 subunit alpha (84 aa).

Residues 22-36 traverse the membrane as a helical segment; that stretch reads IIHSITIPALFVAGW. His-24 provides a ligand contact to heme.

Belongs to the PsbE/PsbF family. As to quaternary structure, heterodimer of an alpha subunit and a beta subunit. PSII is composed of 1 copy each of membrane proteins PsbA, PsbB, PsbC, PsbD, PsbE, PsbF, PsbH, PsbI, PsbJ, PsbK, PsbL, PsbM, PsbT, PsbX, PsbY, PsbZ, Psb30/Ycf12, at least 3 peripheral proteins of the oxygen-evolving complex and a large number of cofactors. It forms dimeric complexes. It depends on heme b as a cofactor.

It localises to the plastid. Its subcellular location is the chloroplast thylakoid membrane. Its function is as follows. This b-type cytochrome is tightly associated with the reaction center of photosystem II (PSII). PSII is a light-driven water:plastoquinone oxidoreductase that uses light energy to abstract electrons from H(2)O, generating O(2) and a proton gradient subsequently used for ATP formation. It consists of a core antenna complex that captures photons, and an electron transfer chain that converts photonic excitation into a charge separation. In Guillardia theta (Cryptophyte), this protein is Cytochrome b559 subunit alpha.